The following is a 337-amino-acid chain: Large ribosomal subunit protein uL3 (337 aa).

A disordered region spans residues 1-32; it reads MAKGHRPRRGSLAYSPRKRSQSHIPRFRSWPE.

This sequence belongs to the universal ribosomal protein uL3 family. Part of the 50S ribosomal subunit. Forms a cluster with proteins L14 and L24e.

One of the primary rRNA binding proteins, it binds directly near the 3'-end of the 23S rRNA, where it nucleates assembly of the 50S subunit. The chain is Large ribosomal subunit protein uL3 from Methanococcoides burtonii (strain DSM 6242 / NBRC 107633 / OCM 468 / ACE-M).